The primary structure comprises 128 residues: Adrenodoxin homolog (128 aa).

The region spanning 12–115 (EQIRIFFKTM…NAVFTVPRAT (104 aa)) is the 2Fe-2S ferredoxin-type domain. [2Fe-2S] cluster contacts are provided by C50, C56, C59, and C96.

The protein belongs to the adrenodoxin/putidaredoxin family. The cofactor is [2Fe-2S] cluster.

It is found in the mitosome. In terms of biological role, ferredoxins are iron-sulfur proteins that transfer electrons in a wide variety of metabolic reactions. In Encephalitozoon cuniculi (strain GB-M1) (Microsporidian parasite), this protein is Adrenodoxin homolog.